A 279-amino-acid polypeptide reads, in one-letter code: Large ribosomal subunit protein mL46 (279 aa).

K230 carries the N6-acetyllysine modification.

It belongs to the mitochondrion-specific ribosomal protein mL46 family. Component of the mitochondrial large ribosomal subunit (mt-LSU). Mature mammalian 55S mitochondrial ribosomes consist of a small (28S) and a large (39S) subunit. The 28S small subunit contains a 12S ribosomal RNA (12S mt-rRNA) and 30 different proteins. The 39S large subunit contains a 16S rRNA (16S mt-rRNA), a copy of mitochondrial valine transfer RNA (mt-tRNA(Val)), which plays an integral structural role, and 52 different proteins. mL46 is located at the central protuberance.

The protein localises to the mitochondrion. This Homo sapiens (Human) protein is Large ribosomal subunit protein mL46 (MRPL46).